A 216-amino-acid chain; its full sequence is Flagellin B2 (216 aa).

Positions Met1–Gly12 are excised as a propeptide. Asn38, Asn72, Asn77, Asn113, Asn172, and Asn208 each carry an N-linked (GlcNAc...) asparagine glycan.

This sequence belongs to the archaeal flagellin family. In terms of processing, N-linked glycans consist of the 779 Da trisaccharide beta-ManNAc(Thr)-(1-4)-beta-GlcNAc3NAcA-(1-3)-beta-GlcNAc.

The protein resides in the archaeal flagellum. Its function is as follows. Flagellin is the subunit protein which polymerizes to form the filaments of archaeal flagella. The polypeptide is Flagellin B2 (flaB2) (Methanococcus voltae).